We begin with the raw amino-acid sequence, 383 residues long: 8-amino-7-oxononanoate synthase (383 aa).

R21 lines the substrate pocket. 108 to 109 (GY) contributes to the pyridoxal 5'-phosphate binding site. Residue H133 coordinates substrate. The pyridoxal 5'-phosphate site is built by S179, H207, and T233. N6-(pyridoxal phosphate)lysine is present on K236. T350 contacts substrate.

The protein belongs to the class-II pyridoxal-phosphate-dependent aminotransferase family. BioF subfamily. As to quaternary structure, homodimer. Pyridoxal 5'-phosphate is required as a cofactor.

The catalysed reaction is 6-carboxyhexanoyl-[ACP] + L-alanine + H(+) = (8S)-8-amino-7-oxononanoate + holo-[ACP] + CO2. The protein operates within cofactor biosynthesis; biotin biosynthesis. In terms of biological role, catalyzes the decarboxylative condensation of pimeloyl-[acyl-carrier protein] and L-alanine to produce 8-amino-7-oxononanoate (AON), [acyl-carrier protein], and carbon dioxide. This is 8-amino-7-oxononanoate synthase from Yersinia pseudotuberculosis serotype IB (strain PB1/+).